We begin with the raw amino-acid sequence, 103 residues long: MAAVSLSVSTVKPLGDRVFVKVSESEEKTAGGILLPDTAKEKPQVGEVAQVGPGKRNEDGSRQSPEVSVGDKVLYSKYAGTDIKLGSDEYVLLSEKDILAVVN.

Residues 31-67 (GGILLPDTAKEKPQVGEVAQVGPGKRNEDGSRQSPEV) are disordered.

The protein belongs to the GroES chaperonin family. In terms of assembly, heptamer of 7 subunits arranged in a ring. Interacts with the chaperonin GroEL.

It is found in the cytoplasm. In terms of biological role, together with the chaperonin GroEL, plays an essential role in assisting protein folding. The GroEL-GroES system forms a nano-cage that allows encapsulation of the non-native substrate proteins and provides a physical environment optimized to promote and accelerate protein folding. GroES binds to the apical surface of the GroEL ring, thereby capping the opening of the GroEL channel. In Prochlorococcus marinus (strain NATL2A), this protein is Co-chaperonin GroES.